Here is a 672-residue protein sequence, read N- to C-terminus: uncharacterized protein (672 aa).

The protein belongs to the MG032/MG096/MG288 family.

This is an uncharacterized protein from Mycoplasma pneumoniae (strain ATCC 29342 / M129 / Subtype 1) (Mycoplasmoides pneumoniae).